An 89-amino-acid chain; its full sequence is Large ribosomal subunit protein eL34 (89 aa).

It belongs to the eukaryotic ribosomal protein eL34 family.

In Methanococcus maripaludis (strain C6 / ATCC BAA-1332), this protein is Large ribosomal subunit protein eL34.